Consider the following 261-residue polypeptide: Global transcriptional regulator CodY (261 aa).

A GAF domain region spans residues 1–159; it reads MPNLLEKTRK…ASTVVGIQLL (159 aa). The H-T-H motif DNA-binding region spans 207–226; the sequence is ASVIADRIGITRSVIVNALR.

The protein belongs to the CodY family.

The protein resides in the cytoplasm. In terms of biological role, DNA-binding global transcriptional regulator which is involved in the adaptive response to starvation and acts by directly or indirectly controlling the expression of numerous genes in response to nutrient availability. During rapid exponential growth, CodY is highly active and represses genes whose products allow adaptation to nutrient depletion. This chain is Global transcriptional regulator CodY, found in Streptococcus agalactiae serotype III (strain NEM316).